The sequence spans 555 residues: Energy-dependent translational throttle protein EttA (555 aa).

ABC transporter domains lie at 6–259 (YTMH…AQEA) and 324–550 (LEVS…RIKY). Residue 39–46 (GLNGAGKS) participates in ATP binding. The segment at 95 to 139 (SEVVNALKRLDEVYALYADPDADFDKLAAEQGRLEEIIQAHDGHN) is arm. Residues 242–322 (GNYSSWLEQK…IPPGPRLGDK (81 aa)) are ptIM. ATP is bound at residue 356–363 (GPNGAGKS).

This sequence belongs to the ABC transporter superfamily. ABCF family. Translational throttle EttA subfamily. Monomer. Probably contacts ribosomal proteins L1, L5, L33 and S7, the 16S and 23S rRNA and the P-site containing tRNA(fMet).

The protein resides in the cytoplasm. The enzyme catalyses ATP + H2O = ADP + phosphate + H(+). A translation factor that gates the progression of the 70S ribosomal initiation complex (IC, containing tRNA(fMet) in the P-site) into the translation elongation cycle by using a mechanism sensitive to the ATP/ADP ratio. Binds to the 70S ribosome E-site where it modulates the state of the translating ribosome during subunit translocation. ATP hydrolysis probably frees it from the ribosome, which can enter the elongation phase. This Escherichia coli O6:H1 (strain CFT073 / ATCC 700928 / UPEC) protein is Energy-dependent translational throttle protein EttA.